The chain runs to 251 residues: Flap endonuclease Xni (251 aa).

Asp104 contacts Mg(2+). The 90-residue stretch at 160 to 249 (VLPRQLPDYW…IDGNLQQLRL (90 aa)) folds into the 5'-3' exonuclease domain. K(+) is bound by residues Leu171, Ala172, Pro180, Val182, and Ile185. The segment at 184 to 189 (GIGPKS) is interaction with DNA.

The protein belongs to the Xni family. Mg(2+) is required as a cofactor. K(+) serves as cofactor.

Its function is as follows. Has flap endonuclease activity. During DNA replication, flap endonucleases cleave the 5'-overhanging flap structure that is generated by displacement synthesis when DNA polymerase encounters the 5'-end of a downstream Okazaki fragment. This chain is Flap endonuclease Xni, found in Salmonella heidelberg (strain SL476).